A 77-amino-acid polypeptide reads, in one-letter code: Translation initiation factor IF-1, chloroplastic (77 aa).

Positions 1 to 71 (MKEQKLIHEG…TRGRIIYRLR (71 aa)) constitute an S1-like domain.

It belongs to the IF-1 family. In terms of assembly, component of the 30S ribosomal translation pre-initiation complex which assembles on the 30S ribosome in the order IF-2 and IF-3, IF-1 and N-formylmethionyl-tRNA(fMet); mRNA recruitment can occur at any time during PIC assembly.

The protein resides in the plastid. The protein localises to the chloroplast. In terms of biological role, one of the essential components for the initiation of protein synthesis. Stabilizes the binding of IF-2 and IF-3 on the 30S subunit to which N-formylmethionyl-tRNA(fMet) subsequently binds. Helps modulate mRNA selection, yielding the 30S pre-initiation complex (PIC). Upon addition of the 50S ribosomal subunit IF-1, IF-2 and IF-3 are released leaving the mature 70S translation initiation complex. The polypeptide is Translation initiation factor IF-1, chloroplastic (Cabomba caroliniana (Carolina fanwort)).